Reading from the N-terminus, the 253-residue chain is Zwei Ig domain protein zig-4 (253 aa).

The signal sequence occupies residues 1 to 16; that stretch reads MFAIALLSFLVVLINA. Ig-like C2-type domains follow at residues 43–146 and 162–245; these read PAKI…AEVE and PEIV…TFLY. Intrachain disulfides connect C67-C130 and C183-C229.

As to expression, expressed in PVT, ASK, BAG, M2 and ASI neurons. In L1 larvae, expressed in pharyngeal ectoderm and mesoderm.

It localises to the secreted. Required for maintaining axon position of PVQ and PVP neurons postembryonically in the ventral nerve cord (VNC) by preventing axons drifting into the opposite side of the VNC that could occur during body growth and movement. The sequence is that of Zwei Ig domain protein zig-4 from Caenorhabditis elegans.